We begin with the raw amino-acid sequence, 295 residues long: GTPase Era (295 aa).

Residues 5–172 (YCGYAAIIGR…EQAVHQLMPE (168 aa)) form the Era-type G domain. The segment at 13 to 20 (GRPNVGKS) is G1. GTP is bound at residue 13-20 (GRPNVGKS). The segment at 39–43 (QTTRY) is G2. A G3 region spans residues 60–63 (DTPG). GTP contacts are provided by residues 60–64 (DTPGL) and 121–124 (NKVD). Positions 121–124 (NKVD) are G4. The interval 151–153 (LSA) is G5. A KH type-2 domain is found at 203 to 279 (LGQEIPYSLA…FLQLWVKVKS (77 aa)).

It belongs to the TRAFAC class TrmE-Era-EngA-EngB-Septin-like GTPase superfamily. Era GTPase family. Monomer.

It is found in the cytoplasm. The protein localises to the cell inner membrane. Functionally, an essential GTPase that binds both GDP and GTP, with rapid nucleotide exchange. Plays a role in 16S rRNA processing and 30S ribosomal subunit biogenesis and possibly also in cell cycle regulation and energy metabolism. This is GTPase Era from Coxiella burnetii (strain RSA 331 / Henzerling II).